Reading from the N-terminus, the 534-residue chain is Probable RNA-binding protein 46 (534 aa).

3 RRM domains span residues 61–139, 141–223, and 236–308; these read CEVF…VSLD, CRLF…WASP, and KVLY…LAKP.

The protein resides in the cytoplasm. Functionally, essential for male and female fertility, playing a crucial role in regulating germ cell development by ensuring the proper progression of meiosis prophase I. The protein is Probable RNA-binding protein 46 (rbm46) of Xenopus tropicalis (Western clawed frog).